The chain runs to 39 residues: Cytochrome b559 subunit beta (39 aa).

The helical transmembrane segment at 14 to 30 (WLAVHGLAVPTVFFLGS) threads the bilayer. His18 lines the heme pocket.

Belongs to the PsbE/PsbF family. Heterodimer of an alpha subunit and a beta subunit. PSII is composed of 1 copy each of membrane proteins PsbA, PsbB, PsbC, PsbD, PsbE, PsbF, PsbH, PsbI, PsbJ, PsbK, PsbL, PsbM, PsbT, PsbX, PsbY, PsbZ, Psb30/Ycf12, at least 3 peripheral proteins of the oxygen-evolving complex and a large number of cofactors. It forms dimeric complexes. Heme b serves as cofactor.

It is found in the plastid membrane. In terms of biological role, this b-type cytochrome is tightly associated with the reaction center of photosystem II (PSII). PSII is a light-driven water:plastoquinone oxidoreductase that uses light energy to abstract electrons from H(2)O, generating O(2) and a proton gradient subsequently used for ATP formation. It consists of a core antenna complex that captures photons, and an electron transfer chain that converts photonic excitation into a charge separation. The sequence is that of Cytochrome b559 subunit beta from Cuscuta europaea (European dodder).